The sequence spans 402 residues: Potassium channel subfamily K member 9 (402 aa).

At 1 to 8 (MKRQNVRT) the chain is on the cytoplasmic side. A helical membrane pass occupies residues 9 to 29 (LSLIACTFTYLLVGAAVFDAL). Over 30–88 (ESDHEMREEEKLKAEEVRLRGKYNISSDDYQQLELVILQSEPHRAGVQWKFAGSFYFAI) the chain is Extracellular. The N-linked (GlcNAc...) asparagine glycan is linked to Asn53. Residues 89-101 (TVITTIGYGHAAP) constitute an intramembrane region (pore-forming). The K(+) site is built by Thr93, Ile94, Gly95, and Tyr96. A selectivity filter 1 region spans residues 93–98 (TIGYGH). Residues 102–107 (GTDAGK) lie on the Extracellular side of the membrane. Residues 108–128 (AFCMFYAVLGIPLTLVMFQSL) traverse the membrane as a helical segment. The Cytoplasmic segment spans residues 129–158 (GERMNTFVRYLLKRIKKCCGMRNTEVSMEN). The chain crosses the membrane as a helical span at residues 159-179 (MVTVGFFSCMGTLCLGAAAFS). Over 180 to 194 (QCEDWSFFHAYYYCF) the chain is Extracellular. Positions 195–207 (ITLTTIGFGDFVA) form an intramembrane region, pore-forming. Positions 199, 200, 201, and 202 each coordinate K(+). The segment at 199–204 (TIGFGD) is selectivity filter 2. Topologically, residues 208–218 (LQAKGALQRKP) are extracellular. Residues 219-239 (FYVAFSFMYILVGLTVIGAFL) traverse the membrane as a helical segment. The Cytoplasmic segment spans residues 240-402 (NLVVLRFLTM…HRLHLRRKSI (163 aa)). The segment at 243–248 (VLRFLT) is X-gate.

This sequence belongs to the two pore domain potassium channel (TC 1.A.1.8) family. In terms of assembly, homodimer. Heterodimer with KCNK1. Heterodimer with KCNK3. In terms of tissue distribution, expressed in adrenal glands mainly in outer zona glomerulosa and inner zona medullaris. Expressed in retinal ganglion cells. Expressed in dentate gyrus (at protein level).

It localises to the cell membrane. It is found in the mitochondrion inner membrane. Its subcellular location is the cell projection. The protein localises to the dendrite. The catalysed reaction is K(+)(in) = K(+)(out). It carries out the reaction Na(+)(in) = Na(+)(out). Inhibited by NTS:NTSR1 signaling in dentate gyrus granule cells. Functionally, k(+) channel that conducts voltage-dependent outward rectifying currents upon membrane depolarization. Voltage sensing is coupled to K(+) electrochemical gradient in an 'ion flux gating' mode where outward but not inward ion flow opens the gate. Changes ion selectivity and becomes permeable to Na(+) ions in response to extracellular acidification. Protonation of the pH sensor His-98 stabilizes C-type inactivation conformation likely converting the channel from outward K(+)-conducting, to inward Na(+)-conducting to nonconductive state. Homo- and heterodimerizes to form functional channels with distinct regulatory and gating properties. Allows K(+) currents with fast-gating kinetics important for the repolarization and hyperpolarization phases of action potentials. In granule neurons, hyperpolarizes the resting membrane potential to limit intrinsic neuronal excitability, but once the action potential threshold is reached, supports high-frequency action potential firing and increased neuronal excitability. Homomeric and/or heteromeric KCNK3:KCNK9 channels operate in cerebellar granule cells, whereas heteromeric KCNK1:KCNK9 enables currents in hippocampal dentate gyrus granule neurons. Dispensable for central chemosensory respiration i.e. breathing controlled by brainstem CO2/pH, it rather conducts pH-sensitive currents and controls the firing rate of serotonergic raphe neurons involved in potentiation of the respiratory chemoreflex. In retinal ganglion cells, mediates outward rectifying currents that regulate action potentials in response to acidification of the synaptic cleft. Involved in transmission of image-forming and nonimage-forming visual information in the retina. In adrenal gland, contributes to the maintenance of a hyperpolarized resting membrane potential of aldosterone-producing cells at zona glomerulosa and limits aldosterone release as part of a regulatory mechanism that controls arterial blood pressure and electrolyte homeostasis. This chain is Potassium channel subfamily K member 9, found in Mus musculus (Mouse).